The chain runs to 163 residues: 2-C-methyl-D-erythritol 2,4-cyclodiphosphate synthase (163 aa).

Residues Asp-8 and His-10 each coordinate a divalent metal cation. Residues 8–10 (DVH) and 34–35 (HS) contribute to the 4-CDP-2-C-methyl-D-erythritol 2-phosphate site. His-42 is an a divalent metal cation binding site. 4-CDP-2-C-methyl-D-erythritol 2-phosphate is bound by residues 56–58 (DIG), 132–135 (TTTE), Phe-139, and Arg-142.

The protein belongs to the IspF family. As to quaternary structure, homotrimer. Requires a divalent metal cation as cofactor.

The catalysed reaction is 4-CDP-2-C-methyl-D-erythritol 2-phosphate = 2-C-methyl-D-erythritol 2,4-cyclic diphosphate + CMP. It functions in the pathway isoprenoid biosynthesis; isopentenyl diphosphate biosynthesis via DXP pathway; isopentenyl diphosphate from 1-deoxy-D-xylulose 5-phosphate: step 4/6. Its function is as follows. Involved in the biosynthesis of isopentenyl diphosphate (IPP) and dimethylallyl diphosphate (DMAPP), two major building blocks of isoprenoid compounds. Catalyzes the conversion of 4-diphosphocytidyl-2-C-methyl-D-erythritol 2-phosphate (CDP-ME2P) to 2-C-methyl-D-erythritol 2,4-cyclodiphosphate (ME-CPP) with a corresponding release of cytidine 5-monophosphate (CMP). This is 2-C-methyl-D-erythritol 2,4-cyclodiphosphate synthase from Moorella thermoacetica (strain ATCC 39073 / JCM 9320).